The sequence spans 396 residues: MPLNSSMECKNYDYDYDSYQPYFYFDNEDEDFYNHQHGQPPAPSEDIWKKFELLPTPPLSPSRRPSLSDPFPSTADKLEMVSEFLGDDVVNHSIICDADYSQSFLKSIIIQDCMWSGFSAAAKLEKVVSERLASLQAARKESSRTESADICRSVGFLQDMSTPASQCIDPSVVFPFPLTDSTKPCKPAPTPASTTLPLDTPPNSGSSSSSSDSESDDEDDEDEEEEEEIDVVTVEKRKSVKKSDANATHQSPVVLKRCHVNIHQHNYAAHPSTRNEQPAVKRIKFESHIRVFKQISHNRKCASPRTSDSEDNDKRRTHNVLERQRRNELKLSFFALRDVIPDVANNEKAAKVVILKKATECIASMQEDEQRLISLKEQLRRKCEHLKQRLEQLSCS.

O-linked (GlcNAc) threonine glycosylation occurs at T56. Positions E79–D87 match the 9aaTAD motif. Disordered regions lie at residues K183 to S251 and N298 to H318. A compositionally biased stretch (low complexity) spans P191–D212. The span at S213 to D230 shows a compositional bias: acidic residues. Basic and acidic residues predominate over residues T233–D244. Positions D313–M365 constitute a bHLH domain. Positions L372–L393 are leucine-zipper.

Efficient DNA binding requires dimerization with another bHLH protein. Binds DNA as a heterodimer with max.

It localises to the nucleus. Its function is as follows. Transcription factor that binds DNA in a non-specific manner, yet also specifically recognizes the core sequence 5'-CAC[GA]TG-3'. Activates the transcription of growth-related genes. The sequence is that of Transcriptional regulator Myc-B from Danio rerio (Zebrafish).